The chain runs to 283 residues: Bifunctional protein FolD (283 aa).

Residues 164 to 166 (GRS), S189, and T230 each bind NADP(+).

This sequence belongs to the tetrahydrofolate dehydrogenase/cyclohydrolase family. As to quaternary structure, homodimer.

It carries out the reaction (6R)-5,10-methylene-5,6,7,8-tetrahydrofolate + NADP(+) = (6R)-5,10-methenyltetrahydrofolate + NADPH. The enzyme catalyses (6R)-5,10-methenyltetrahydrofolate + H2O = (6R)-10-formyltetrahydrofolate + H(+). It functions in the pathway one-carbon metabolism; tetrahydrofolate interconversion. In terms of biological role, catalyzes the oxidation of 5,10-methylenetetrahydrofolate to 5,10-methenyltetrahydrofolate and then the hydrolysis of 5,10-methenyltetrahydrofolate to 10-formyltetrahydrofolate. The sequence is that of Bifunctional protein FolD from Dictyoglomus thermophilum (strain ATCC 35947 / DSM 3960 / H-6-12).